The chain runs to 590 residues: Putative ferric-chelate reductase 1 (590 aa).

Residues 2-22 (NPLGLFLIYLYTCALTPVSGY) form a helical membrane-spanning segment. The region spanning 12–179 (YTCALTPVSG…APKIPSSTIP (168 aa)) is the Reelin domain. Residues 217–330 (ECFFLSFRKD…RSYFIFLADG (114 aa)) enclose the DOMON domain. One can recognise a Cytochrome b561 domain in the interval 334–533 (DGLLYRHHRQ…VFVDLLLEAH (200 aa)). The helical transmembrane segment at 371 to 391 (LHGAMMFIAWMTTVSIGVIIA) threads the bilayer. Histidine 372 and histidine 413 together coordinate heme b. A run of 2 helical transmembrane segments spans residues 416–436 (LMIT…IYRG) and 445–465 (HPHL…LAVF). Histidine 445 provides a ligand contact to heme b. A glycan (N-linked (GlcNAc...) asparagine) is linked at asparagine 478. Heme b is bound at residue histidine 481. Helical transmembrane passes span 482-502 (WATG…GMDL), 517-537 (IGFV…GFCL), and 567-587 (IVMT…LAAI).

It belongs to the FRRS1 family. Heme b is required as a cofactor.

Its subcellular location is the membrane. Its function is as follows. Putative ferric-chelate reductases reduce Fe(3+) to Fe(2+) before its transport from the endosome to the cytoplasm. This chain is Putative ferric-chelate reductase 1 (frrs1), found in Xenopus laevis (African clawed frog).